Consider the following 289-residue polypeptide: ADP-polyphosphate phosphotransferase (289 aa).

It belongs to the polyphosphate kinase 2 (PPK2) family. Class I subfamily.

The enzyme catalyses [phosphate](n) + ATP = [phosphate](n+1) + ADP. Functionally, uses inorganic polyphosphate (polyP) as a donor to convert ADP to ATP. This is ADP-polyphosphate phosphotransferase from Rhodopseudomonas palustris (strain ATCC BAA-98 / CGA009).